We begin with the raw amino-acid sequence, 82 residues long: MASSSGAGAAAAAAAANLNAVRETMDVLLEISRILNTGLDMETLSICVRLCEQGINPEALSSVIKELRKATEALKAAENMTS.

Alanine 2 carries the N-acetylalanine modification.

The protein belongs to the MOZART1 family. In terms of assembly, associates with the gamma-tubulin ring complex (gTuRC) consisting of TUBGCP2, TUBGCP3, TUBGCP4, TUBGCP5 and TUBGCP6 and gamma-tubulin TUBG1 or TUBG2; within the complex, interacts with TUBGCP3 and TUBGCP6 to form a luminal bridge with actin that stabilizes the initial structure during complex assembly. Interacts with TUBG1.

It is found in the cytoplasm. The protein resides in the cytoskeleton. Its subcellular location is the microtubule organizing center. The protein localises to the centrosome. It localises to the spindle. In terms of biological role, required for the recruitment and the assembly of the gamma-tubulin ring complex (gTuRC) at the centrosome. The gTuRC regulates the minus-end nucleation of alpha-beta tubulin heterodimers that grow into microtubule protafilaments, a critical step in centrosome duplication and spindle formation. The protein is Mitotic-spindle organizing protein 1 (MZT1) of Homo sapiens (Human).